The primary structure comprises 137 residues: Protein shisa-5 (137 aa).

A helical membrane pass occupies residues F3–I23.

It belongs to the shisa family. In terms of assembly, interacts with PDCD6; PDCD6 can stabilize SHISA5.

The protein localises to the endoplasmic reticulum membrane. It is found in the nucleus membrane. In terms of biological role, can induce apoptosis in a caspase-dependent manner and plays a role in p53/TP53-dependent apoptosis. This chain is Protein shisa-5 (SHISA5), found in Pongo abelii (Sumatran orangutan).